A 351-amino-acid polypeptide reads, in one-letter code: Biotin synthase (351 aa).

Residues 44 to 262 (NRVQVSTLLS…LAVARIMMPK (219 aa)) form the Radical SAM core domain. The [4Fe-4S] cluster site is built by Cys59, Cys63, and Cys66. [2Fe-2S] cluster is bound by residues Cys103, Cys134, Cys194, and Arg266.

It belongs to the radical SAM superfamily. Biotin synthase family. As to quaternary structure, homodimer. [4Fe-4S] cluster serves as cofactor. It depends on [2Fe-2S] cluster as a cofactor.

The enzyme catalyses (4R,5S)-dethiobiotin + (sulfur carrier)-SH + 2 reduced [2Fe-2S]-[ferredoxin] + 2 S-adenosyl-L-methionine = (sulfur carrier)-H + biotin + 2 5'-deoxyadenosine + 2 L-methionine + 2 oxidized [2Fe-2S]-[ferredoxin]. Its pathway is cofactor biosynthesis; biotin biosynthesis; biotin from 7,8-diaminononanoate: step 2/2. In terms of biological role, catalyzes the conversion of dethiobiotin (DTB) to biotin by the insertion of a sulfur atom into dethiobiotin via a radical-based mechanism. In Stutzerimonas stutzeri (strain A1501) (Pseudomonas stutzeri), this protein is Biotin synthase.